The chain runs to 464 residues: Argininosuccinate lyase (464 aa).

This sequence belongs to the lyase 1 family. Argininosuccinate lyase subfamily.

The protein resides in the cytoplasm. The enzyme catalyses 2-(N(omega)-L-arginino)succinate = fumarate + L-arginine. Its pathway is amino-acid biosynthesis; L-arginine biosynthesis; L-arginine from L-ornithine and carbamoyl phosphate: step 3/3. This is Argininosuccinate lyase from Streptococcus suis (strain 98HAH33).